The chain runs to 968 residues: Insulin receptor substrate 1 (968 aa).

Residues 8–109 (GMALSGYLKK…WLDKLLVLQR (102 aa)) form the PH domain. Residues 122–236 (YDHVWQVVIQ…SAMSAKTESN (115 aa)) enclose the IRS-type PTB domain. Residues 248-269 (DLSHEPMRKRSSSANEASKPIN) are disordered. Phosphoserine occurs at positions 286 and 287. The span at 304–329 (RNGTLSESSNQTYFGSNHGLRSNTIS) shows a compositional bias: polar residues. The segment at 304 to 370 (RNGTLSESSN…VDESDDNGSF (67 aa)) is disordered. Ser342 is subject to Phosphoserine. Residue Tyr411 is modified to Phosphotyrosine; by INSR. The short motif at 411 to 414 (YIPM) is the YXXM motif 1 element. The disordered stretch occupies residues 528 to 555 (TANRSQSSITKEGTSYGSSANRQKKSTS). A compositionally biased stretch (polar residues) spans 529 to 555 (ANRSQSSITKEGTSYGSSANRQKKSTS). Ser555 bears the Phosphoserine mark. Positions 641–644 (YLEM) match the YXXM motif 2 motif. The span at 697–711 (EKWREQPSRSEEKKS) shows a compositional bias: basic and acidic residues. The tract at residues 697-739 (EKWREQPSRSEEKKSNSPLNDNTFSSKPTNVESTSKSHDVHSA) is disordered. Positions 712 to 730 (NSPLNDNTFSSKPTNVEST) are enriched in polar residues. The residue at position 911 (Tyr911) is a Phosphotyrosine; by INSR. Residues 922 to 968 (QNPAKYLKRGSRESPPVSACPEDGNTYAKIDFDQSDSSSSSSNIFNT) form a disordered region. 2 positions are modified to phosphoserine: Ser932 and Ser935. The residue at position 948 (Tyr948) is a Phosphotyrosine; by INSR. The span at 956–968 (SDSSSSSSNIFNT) shows a compositional bias: low complexity.

As to quaternary structure, bindings to phosphatidylinositol 3-kinase and SHP2.

Functionally, activates phosphatidylinositol 3-kinase when bound to the regulatory p85 subunit. May mediate the control of various cellular processes by insulin-like peptides. When phosphorylated by the insulin receptor binds specifically to various cellular proteins containing SH2 domains. Involved in control of cell proliferation, cell size, and body and organ growth throughout development. Also has a role in a signaling pathway controlling the physiological response required to endure periods of low nutrient conditions. Insulin/insulin-like growth factor (IGF) signaling pathway has a role in regulating aging and is necessary in the ovary for vitellogenic maturation. This chain is Insulin receptor substrate 1 (chico), found in Drosophila melanogaster (Fruit fly).